The sequence spans 258 residues: Imidazole glycerol phosphate synthase subunit HisF (258 aa).

Residues D11 and D130 contribute to the active site.

It belongs to the HisA/HisF family. In terms of assembly, heterodimer of HisH and HisF.

The protein resides in the cytoplasm. It catalyses the reaction 5-[(5-phospho-1-deoxy-D-ribulos-1-ylimino)methylamino]-1-(5-phospho-beta-D-ribosyl)imidazole-4-carboxamide + L-glutamine = D-erythro-1-(imidazol-4-yl)glycerol 3-phosphate + 5-amino-1-(5-phospho-beta-D-ribosyl)imidazole-4-carboxamide + L-glutamate + H(+). The protein operates within amino-acid biosynthesis; L-histidine biosynthesis; L-histidine from 5-phospho-alpha-D-ribose 1-diphosphate: step 5/9. Functionally, IGPS catalyzes the conversion of PRFAR and glutamine to IGP, AICAR and glutamate. The HisF subunit catalyzes the cyclization activity that produces IGP and AICAR from PRFAR using the ammonia provided by the HisH subunit. In Shigella flexneri serotype 5b (strain 8401), this protein is Imidazole glycerol phosphate synthase subunit HisF.